The chain runs to 386 residues: Terpene cyclase 6 (386 aa).

Residues Asp128, Asn276, and Ser280 each coordinate Mg(2+). The D(D/E)XX(D/E) motif signature appears at 128–132 (DDEID). The short motif at 276-284 (NEILSLQKE) is the NSE motif element. The short motif at 360 to 367 (WSYNCERY) is the WxxxxxRY motif element. (2E,6E)-farnesyl diphosphate is bound by residues Arg366 and Tyr367.

It belongs to the terpene synthase family. As to quaternary structure, homodimer. Requires Mg(2+) as cofactor.

The catalysed reaction is (2E,6E)-farnesyl diphosphate + H2O = trichobrasilenol + diphosphate. It carries out the reaction (2E,6E)-farnesyl diphosphate = alpha-humulene + diphosphate. The enzyme catalyses (2E,6E)-farnesyl diphosphate = (-)-(E)-beta-caryophyllene + diphosphate. It catalyses the reaction (2E,6E)-farnesyl diphosphate = (E)-2-epi-beta-caryophyllene + diphosphate. The catalysed reaction is (2E,6E)-farnesyl diphosphate + H2O = (+)-isoafricanol + diphosphate. It carries out the reaction (2E,6E)-farnesyl diphosphate + H2O = (+)-(2S,3R,9R)-pristinol + diphosphate. The enzyme catalyses (2E,6E)-farnesyl diphosphate = african-3-ene + diphosphate. It catalyses the reaction (2E,6E)-farnesyl diphosphate = african-1-ene + diphosphate. It functions in the pathway sesquiterpene biosynthesis. Its function is as follows. Terpene cyclase that is able to convert FPP into a mixture of sesquiterpene hydrocarbons and alcohols. The main product is trichobrasilenol. Additionally, side products include alpha-humulene, caryophyllene, 2-epi-caryophyllene, african-3-ene, african-1-ene, isoafricanol and pristinol. Does not accept GPP, GGPP, and GFPP as substrates. This chain is Terpene cyclase 6, found in Hypocrea atroviridis (Trichoderma atroviride).